Here is a 178-residue protein sequence, read N- to C-terminus: Ribosome maturation factor RimM (178 aa).

The PRC barrel domain maps to 100–178 (TDGEYYWYQL…EMKVEWDADF (79 aa)).

Belongs to the RimM family. In terms of assembly, binds ribosomal protein uS19.

It is found in the cytoplasm. Functionally, an accessory protein needed during the final step in the assembly of 30S ribosomal subunit, possibly for assembly of the head region. Essential for efficient processing of 16S rRNA. May be needed both before and after RbfA during the maturation of 16S rRNA. It has affinity for free ribosomal 30S subunits but not for 70S ribosomes. This Pseudomonas fluorescens (strain SBW25) protein is Ribosome maturation factor RimM.